Here is a 220-residue protein sequence, read N- to C-terminus: MSVKIHYQNTHFITSAPDIRHLPEDEGIEIAFAGRSNAGKSSSLNRLTNQKNLAKTSKTPGRTQLINLFKVADGCHIVDLPGYGFAQVPLEMKLKWQRALGEYLQKRQSLKGLVVLMDIRHPMKDLDQQLIIWAVECGIPVQVMLTKADKLKSGARKAQVLKVREEAKTFGGDVAVDAFSSLSGIGVDTLRAKLDEWYAPMLAALAEQEEGEQPESSTDQ.

The EngB-type G domain occupies Glu-26 to Pro-200. GTP-binding positions include Gly-34–Ser-41, Gly-61–Leu-65, Asp-79–Gly-82, Thr-146–Asp-149, and Phe-179–Ser-181. The Mg(2+) site is built by Ser-41 and Thr-63.

This sequence belongs to the TRAFAC class TrmE-Era-EngA-EngB-Septin-like GTPase superfamily. EngB GTPase family. Mg(2+) serves as cofactor.

Necessary for normal cell division and for the maintenance of normal septation. The chain is Probable GTP-binding protein EngB from Vibrio cholerae serotype O1 (strain ATCC 39315 / El Tor Inaba N16961).